Here is a 375-residue protein sequence, read N- to C-terminus: MQCALYDAGRCRSCQWITQLIPEQLSAKTADLKNLLADFPVEEWCAPVSGPEQGFRNKAKMVVSGSVEKPLLGMLHRDGTPEDLCDCPLYPASFAPVFAALKPFIACAGLTPYNVARKRGELKYILLTESQSDGGMMLRFVLRSETKLAQLRKALPWLQEQLPQLKVITVNIQPVHMAIMEGETEIYLTEQQALAERFNDVPLWIRPQSFFQTNPAVASQLYATVRDWVRQLPVKHMWDLFCGVGGFGLHCATPDMQLTGIEIAPEAIACAKQSAAELGLTRLQFQALDSTQFATAQGEVQELVLVNPPRRGIGKPLCDYLSTMAPRFIIYSSCNAQTMAKDIRELPGFRIERVQLFDMFPHTAHYEVLTLLVKQ.

Residues Cys3, Cys11, Cys14, and Cys87 each coordinate [4Fe-4S] cluster. S-adenosyl-L-methionine-binding residues include Gln212, Phe241, Glu262, and Asn307. Cys334 serves as the catalytic Nucleophile.

Belongs to the class I-like SAM-binding methyltransferase superfamily. RNA M5U methyltransferase family. RlmC subfamily.

The catalysed reaction is uridine(747) in 23S rRNA + S-adenosyl-L-methionine = 5-methyluridine(747) in 23S rRNA + S-adenosyl-L-homocysteine + H(+). Functionally, catalyzes the formation of 5-methyl-uridine at position 747 (m5U747) in 23S rRNA. The polypeptide is 23S rRNA (uracil(747)-C(5))-methyltransferase RlmC (Shigella boydii serotype 18 (strain CDC 3083-94 / BS512)).